Consider the following 495-residue polypeptide: Glycerol kinase (495 aa).

Thr-11 is a binding site for ADP. ATP contacts are provided by Thr-11, Thr-12, and Ser-13. Sn-glycerol 3-phosphate is bound at residue Thr-11. Arg-15 contacts ADP. 4 residues coordinate sn-glycerol 3-phosphate: Arg-81, Glu-82, Tyr-133, and Asp-242. Residues Arg-81, Glu-82, Tyr-133, Asp-242, and Gln-243 each coordinate glycerol. The ADP site is built by Thr-264 and Gly-307. The ATP site is built by Thr-264, Gly-307, Gln-311, and Gly-408. ADP is bound by residues Gly-408 and Asn-412.

The protein belongs to the FGGY kinase family.

The catalysed reaction is glycerol + ATP = sn-glycerol 3-phosphate + ADP + H(+). It participates in polyol metabolism; glycerol degradation via glycerol kinase pathway; sn-glycerol 3-phosphate from glycerol: step 1/1. With respect to regulation, inhibited by fructose 1,6-bisphosphate (FBP). In terms of biological role, key enzyme in the regulation of glycerol uptake and metabolism. Catalyzes the phosphorylation of glycerol to yield sn-glycerol 3-phosphate. This Alkalilimnicola ehrlichii (strain ATCC BAA-1101 / DSM 17681 / MLHE-1) protein is Glycerol kinase.